The sequence spans 317 residues: Probable deoxyhypusine synthase 1 (317 aa).

Lys-285 (nucleophile) is an active-site residue.

It belongs to the deoxyhypusine synthase family. The cofactor is NAD(+).

It carries out the reaction [eIF5A protein]-L-lysine + spermidine = [eIF5A protein]-deoxyhypusine + propane-1,3-diamine. Its pathway is protein modification; eIF5A hypusination. In terms of biological role, catalyzes the NAD-dependent oxidative cleavage of spermidine and the subsequent transfer of the butylamine moiety of spermidine to the epsilon-amino group of a specific lysine residue of the eIF-5A precursor protein to form the intermediate deoxyhypusine residue. The protein is Probable deoxyhypusine synthase 1 (dys1) of Methanosarcina mazei (strain ATCC BAA-159 / DSM 3647 / Goe1 / Go1 / JCM 11833 / OCM 88) (Methanosarcina frisia).